Here is a 166-residue protein sequence, read N- to C-terminus: Ribosome maturation factor RimM (166 aa).

The PRC barrel domain occupies glutamate 94–leucine 166.

It belongs to the RimM family. As to quaternary structure, binds ribosomal protein uS19.

The protein resides in the cytoplasm. An accessory protein needed during the final step in the assembly of 30S ribosomal subunit, possibly for assembly of the head region. Essential for efficient processing of 16S rRNA. May be needed both before and after RbfA during the maturation of 16S rRNA. It has affinity for free ribosomal 30S subunits but not for 70S ribosomes. This Rickettsia bellii (strain RML369-C) protein is Ribosome maturation factor RimM.